Reading from the N-terminus, the 159-residue chain is SsrA-binding protein (159 aa).

This sequence belongs to the SmpB family.

The protein resides in the cytoplasm. Required for rescue of stalled ribosomes mediated by trans-translation. Binds to transfer-messenger RNA (tmRNA), required for stable association of tmRNA with ribosomes. tmRNA and SmpB together mimic tRNA shape, replacing the anticodon stem-loop with SmpB. tmRNA is encoded by the ssrA gene; the 2 termini fold to resemble tRNA(Ala) and it encodes a 'tag peptide', a short internal open reading frame. During trans-translation Ala-aminoacylated tmRNA acts like a tRNA, entering the A-site of stalled ribosomes, displacing the stalled mRNA. The ribosome then switches to translate the ORF on the tmRNA; the nascent peptide is terminated with the 'tag peptide' encoded by the tmRNA and targeted for degradation. The ribosome is freed to recommence translation, which seems to be the essential function of trans-translation. The chain is SsrA-binding protein from Acidiphilium cryptum (strain JF-5).